Reading from the N-terminus, the 519-residue chain is Protein nucleotidyltransferase YdiU (519 aa).

ATP contacts are provided by Gly-100, Gly-102, Arg-103, Lys-123, Asp-135, Gly-136, Arg-193, and Arg-200. Residue Asp-270 is the Proton acceptor of the active site. Residues Asn-271 and Asp-280 each contribute to the Mg(2+) site. Asp-280 serves as a coordination point for ATP.

Belongs to the SELO family. It depends on Mg(2+) as a cofactor. Requires Mn(2+) as cofactor.

It catalyses the reaction L-seryl-[protein] + ATP = 3-O-(5'-adenylyl)-L-seryl-[protein] + diphosphate. The enzyme catalyses L-threonyl-[protein] + ATP = 3-O-(5'-adenylyl)-L-threonyl-[protein] + diphosphate. The catalysed reaction is L-tyrosyl-[protein] + ATP = O-(5'-adenylyl)-L-tyrosyl-[protein] + diphosphate. It carries out the reaction L-histidyl-[protein] + UTP = N(tele)-(5'-uridylyl)-L-histidyl-[protein] + diphosphate. It catalyses the reaction L-seryl-[protein] + UTP = O-(5'-uridylyl)-L-seryl-[protein] + diphosphate. The enzyme catalyses L-tyrosyl-[protein] + UTP = O-(5'-uridylyl)-L-tyrosyl-[protein] + diphosphate. Functionally, nucleotidyltransferase involved in the post-translational modification of proteins. It can catalyze the addition of adenosine monophosphate (AMP) or uridine monophosphate (UMP) to a protein, resulting in modifications known as AMPylation and UMPylation. The sequence is that of Protein nucleotidyltransferase YdiU from Xylella fastidiosa (strain 9a5c).